The primary structure comprises 428 residues: RUN domain-containing protein 3A (428 aa).

In terms of domain architecture, RUN spans 52–182 (DDSSEEFINF…IDFSFCLKGE (131 aa)). Positions 237–314 (ESWRNKCRKM…ELQEQLTSLI (78 aa)) form a coiled coil. The segment at 349–375 (HRGSFPSPEPHISLTTGSQRTERKQNG) is disordered.

It belongs to the RUNDC3 family.

The polypeptide is RUN domain-containing protein 3A (rundc3a) (Danio rerio (Zebrafish)).